Reading from the N-terminus, the 236-residue chain is Urease accessory protein UreG (236 aa).

The disordered stretch occupies residues 1 to 26; it reads MHDHSLHSGHDHGLGPGSFHDRGAPH. 42 to 49 serves as a coordination point for GTP; the sequence is GPVGSGKT.

It belongs to the SIMIBI class G3E GTPase family. UreG subfamily. In terms of assembly, homodimer. UreD, UreF and UreG form a complex that acts as a GTP-hydrolysis-dependent molecular chaperone, activating the urease apoprotein by helping to assemble the nickel containing metallocenter of UreC. The UreE protein probably delivers the nickel.

Its subcellular location is the cytoplasm. Facilitates the functional incorporation of the urease nickel metallocenter. This process requires GTP hydrolysis, probably effectuated by UreG. This is Urease accessory protein UreG from Anaeromyxobacter sp. (strain Fw109-5).